The primary structure comprises 106 residues: Trp operon repressor homolog (106 aa).

Residues 59-82 mediate DNA binding; that stretch reads QREIQQILNTSAATITRGSNMIKI.

Belongs to the TrpR family. In terms of assembly, homodimer.

It localises to the cytoplasm. In terms of biological role, this protein is an aporepressor. When complexed with L-tryptophan it binds the operator region of the trp operon and prevents the initiation of transcription. The sequence is that of Trp operon repressor homolog from Histophilus somni (strain 2336) (Haemophilus somnus).